Consider the following 724-residue polypeptide: Probable dipeptidyl-peptidase 5 (724 aa).

A signal peptide spans 1–19 (MGALTWLSVVAAAASTALA). N-linked (GlcNAc...) asparagine glycosylation is found at asparagine 76, asparagine 97, asparagine 154, asparagine 257, asparagine 383, and asparagine 453. The active-site Charge relay system is serine 563. N-linked (GlcNAc...) asparagine glycosylation occurs at asparagine 610. Catalysis depends on charge relay system residues aspartate 646 and histidine 678.

It belongs to the peptidase S9C family.

Its subcellular location is the secreted. In terms of biological role, extracellular dipeptidyl-peptidase which removes N-terminal dipeptides sequentially from polypeptides having unsubstituted N-termini. The protein is Probable dipeptidyl-peptidase 5 (dpp5) of Aspergillus clavatus (strain ATCC 1007 / CBS 513.65 / DSM 816 / NCTC 3887 / NRRL 1 / QM 1276 / 107).